The sequence spans 942 residues: DNA mismatch repair protein MSH2 (942 aa).

Position 667–674 (667–674 (GPNMGGKS)) interacts with ATP.

The protein belongs to the DNA mismatch repair MutS family. As to quaternary structure, heterodimer of MSH2 and MSH6 (GTBP).

The protein resides in the nucleus. Its function is as follows. Involved in postreplication mismatch repair. Binds specifically to DNA containing mismatched nucleotides thus providing a target for the excision repair processes characteristic of postreplication mismatch repair. The sequence is that of DNA mismatch repair protein MSH2 (MUS1) from Zea mays (Maize).